Consider the following 90-residue polypeptide: Acyl-CoA-binding protein (90 aa).

The segment covering 1–16 (MGLKEDFEEHAEKAKT) has biased composition (basic and acidic residues). Residues 1–20 (MGLKEDFEEHAEKAKTLPEN) form a disordered region. An ACB domain is found at 3-88 (LKEDFEEHAE…VKQLLGEAAA (86 aa)). An acyl-CoA is bound by residues 30–34 (YGLYK), Lys-56, and Tyr-75.

The protein belongs to the ACBP family.

Its function is as follows. Binds medium- and long-chain acyl-CoA esters with very high affinity and may function as an intracellular carrier of acyl-CoA esters. This chain is Acyl-CoA-binding protein, found in Ricinus communis (Castor bean).